Consider the following 263-residue polypeptide: Proteasome subunit beta type-4 (263 aa).

An N-acetylmethionine modification is found at methionine 1. The propeptide occupies methionine 1–arginine 44. Position 26 is a phosphoserine (serine 26). Residue tyrosine 101 is modified to Phosphotyrosine.

It belongs to the peptidase T1B family. As to quaternary structure, the 26S proteasome consists of a 20S proteasome core and two 19S regulatory subunits. The 20S proteasome core is a barrel-shaped complex made of 28 subunits that are arranged in four stacked rings. The two outer rings are each formed by seven alpha subunits, and the two inner rings are formed by seven beta subunits. The proteolytic activity is exerted by three beta-subunits PSMB5, PSMB6 and PSMB7. Forms a ternary complex with SMAD1 and OAZ1 before PSMB4 is incorporated into the 20S proteasome. Interacts with PRPF19.

The protein localises to the cytoplasm. The protein resides in the nucleus. Its function is as follows. Non-catalytic component of the 20S core proteasome complex involved in the proteolytic degradation of most intracellular proteins. This complex plays numerous essential roles within the cell by associating with different regulatory particles. Associated with two 19S regulatory particles, forms the 26S proteasome and thus participates in the ATP-dependent degradation of ubiquitinated proteins. The 26S proteasome plays a key role in the maintenance of protein homeostasis by removing misfolded or damaged proteins that could impair cellular functions, and by removing proteins whose functions are no longer required. Associated with the PA200 or PA28, the 20S proteasome mediates ubiquitin-independent protein degradation. This type of proteolysis is required in several pathways including spermatogenesis (20S-PA200 complex) or generation of a subset of MHC class I-presented antigenic peptides (20S-PA28 complex). SMAD1/OAZ1/PSMB4 complex mediates the degradation of the CREBBP/EP300 repressor SNIP1. In Rattus norvegicus (Rat), this protein is Proteasome subunit beta type-4 (Psmb4).